A 512-amino-acid chain; its full sequence is Inositol-3-phosphate synthase (512 aa).

NAD(+) contacts are provided by glycine 72, glycine 73, asparagine 74, asparagine 75, aspartate 145, isoleucine 182, glutamine 192, arginine 195, threonine 232, glycine 233, asparagine 234, threonine 235, glycine 283, serine 284, aspartate 308, serine 311, asparagine 342, asparagine 343, aspartate 344, lysine 357, glycine 395, aspartate 396, aspartate 424, and serine 425.

Belongs to the myo-inositol 1-phosphate synthase family. NAD(+) is required as a cofactor.

It is found in the cytoplasm. The protein localises to the cytosol. It localises to the nucleus. It catalyses the reaction D-glucose 6-phosphate = 1D-myo-inositol 3-phosphate. It participates in polyol metabolism; myo-inositol biosynthesis; myo-inositol from D-glucose 6-phosphate: step 1/2. Key enzyme in myo-inositol biosynthesis pathway that catalyzes the conversion of glucose 6-phosphate to 1-myo-inositol 1-phosphate in a NAD-dependent manner. The sequence is that of Inositol-3-phosphate synthase from Mesembryanthemum crystallinum (Common ice plant).